A 458-amino-acid polypeptide reads, in one-letter code: Na(+)/H(+) antiporter NhaA (458 aa).

12 consecutive transmembrane segments (helical) span residues 27–47, 78–98, 114–134, 143–163, 172–192, 201–221, 222–242, 249–269, 316–336, 346–366, 388–408, and 421–441; these read FLHVEAFSGIVLLLAAAAALI, LHFWVNDALMTVFFLVAGMEI, ILPIVSAIGGVCFPALIYLSF, GWAVPTATDIAFALGILALLG, VILLSLAIIDDIIAVLIIAFF, GLAIAIAGIALVLFFQWIGLA, SAWLYILPGAIIWWGLMITGV, VILGMMTPVFPTRTLVAPLTI, PWVAYGVMPIFAFANAGVSFA, FLVVLSVVIGLFIGKPLGIIT, ILLIGFLAGIGFTMSIFVSML, and IGVLCGSGLSALAGLGYGLIY.

It belongs to the NhaA Na(+)/H(+) (TC 2.A.33) antiporter family.

Its subcellular location is the cell inner membrane. It carries out the reaction Na(+)(in) + 2 H(+)(out) = Na(+)(out) + 2 H(+)(in). Its function is as follows. Na(+)/H(+) antiporter that extrudes sodium in exchange for external protons. This chain is Na(+)/H(+) antiporter NhaA, found in Bartonella quintana (strain Toulouse) (Rochalimaea quintana).